Here is a 134-residue protein sequence, read N- to C-terminus: Arsenate reductase (134 aa).

Catalysis depends on nucleophile residues cysteine 11, cysteine 83, and cysteine 90. Intrachain disulfides connect cysteine 11/cysteine 83 and cysteine 83/cysteine 90.

The protein belongs to the low molecular weight phosphotyrosine protein phosphatase family. Thioredoxin-coupled ArsC subfamily.

The protein resides in the cytoplasm. The enzyme catalyses arsenate + [thioredoxin]-dithiol + H(+) = arsenite + [thioredoxin]-disulfide + H2O. Its function is as follows. Catalyzes the reduction of arsenate [As(V)] to arsenite [As(III)]. This Brevibacillus brevis (strain 47 / JCM 6285 / NBRC 100599) protein is Arsenate reductase.